We begin with the raw amino-acid sequence, 614 residues long: V-type proton ATPase catalytic subunit A (614 aa).

247–254 lines the ATP pocket; it reads GAFGCGKT.

It belongs to the ATPase alpha/beta chains family. V-ATPase is a heteromultimeric enzyme made up of two complexes: the ATP-hydrolytic V1 complex and the proton translocation V0 complex. The V1 complex consists of three catalytic AB heterodimers that form a heterohexamer, three peripheral stalks each consisting of EG heterodimers, one central rotor including subunits D and F, and the regulatory subunits C and H. The proton translocation complex V0 consists of the proton transport subunit a, a ring of proteolipid subunits c9c'', rotary subunit d, subunits e and f, and the accessory subunits VhaAC45 and ATP6AP2.

It carries out the reaction ATP + H2O + 4 H(+)(in) = ADP + phosphate + 5 H(+)(out). Its activity is regulated as follows. ATP hydrolysis occurs at the interface between the nucleotide-binding domains of subunits A and B. ATP hydrolysis triggers a conformational change in the subunits D and F, which induces a shift of subunit d. The c-ring is subsequently rotated and results in a continuous proton translocation across the membrane. Functionally, catalytic subunit of the V1 complex of vacuolar(H+)-ATPase (V-ATPase), a multisubunit enzyme composed of a peripheral complex (V1) that hydrolyzes ATP and a membrane integral complex (V0) that translocates protons. V-ATPase is responsible for acidifying and maintaining the pH of intracellular compartments and in some cell types, is targeted to the plasma membrane, where it is responsible for acidifying the extracellular environment. This Anopheles gambiae (African malaria mosquito) protein is V-type proton ATPase catalytic subunit A.